A 581-amino-acid polypeptide reads, in one-letter code: Nicotinic acid-CoA ligase pyr1 (581 aa).

204-215 (MFLTSGTSGLPK) lines the AMP pocket. Positions 477 to 555 (EIEGILLKDP…DEIPRTGIGK (79 aa)) are AMP-binding.

It belongs to the ATP-dependent AMP-binding enzyme family.

The enzyme catalyses nicotinate + ATP + CoA = nicotinyl-CoA + AMP + diphosphate. Its pathway is secondary metabolite biosynthesis; terpenoid biosynthesis. Its function is as follows. Nicotinic acid-CoA ligase; part of the gene cluster that mediates the biosynthesis of pyripyropene A, a specific human acyl-coenzyme A:cholesterol acyltransferase 2 inhibitor. The first step of the pathway is the synthesis of nicotinyl-CoA from nicotinic acid by the nicotinic acid-CoA ligase pyr1. Nicotinyl-CoA is then a substrate of polyketide synthase pyr2 to produce 4-hydroxy-6-(3-pyridinyl)-2H-pyran-2-one (HPPO) which is further prenylated by the polyprenyl transferase pyr6 to yield farnesyl-HPPO. The next steps consist of an epoxidation of farnesyl-HPPO to epoxyfarnesyl-HPPO by FAD-dependent monooxygenase pyr5 and a cyclization of the terpenoid portion by the terpene cyclase pyr4 to yield deacetyl-pyripyropene E. The 2 cytochrome P450 monooxygenases pyr3 and pyr9, and the 2 acetyltransferases pyr7 and pyr8 are involved in the conversion of deacetyl-pyripyropene E into pyripyropene A through several cycles of oxidation and acetylation steps. Pyr7 acetylates deacetyl-pyripyropene E to pyripyropene E which is oxidized to 11-deacetyl-pyripyropene O by pyr3, which is in turn acetylated into pyripyropene O by pyr8. Pyripyropene O is then oxidized to deacetyl-pyripyropene A by pyr9. Deacetyl-pyripyropene A is finally acetylated to pyripyropene A by pyr8. The protein is Nicotinic acid-CoA ligase pyr1 of Aspergillus fumigatus (strain ATCC MYA-4609 / CBS 101355 / FGSC A1100 / Af293) (Neosartorya fumigata).